Reading from the N-terminus, the 396-residue chain is THAP domain-containing protein 5 (396 aa).

A THAP-type zinc finger spans residues 2-85; sequence MPRYCAAICC…LKQTAVPTIF (84 aa). The disordered stretch occupies residues 86 to 113; sequence SLPEDNQGKDPSKKKSQKKNLEDEKEVC. The span at 91–113 shows a compositional bias: basic and acidic residues; that stretch reads NQGKDPSKKKSQKKNLEDEKEVC. The short motif at 322–325 is the HCFC1-binding motif (HBM) element; sequence EHSY. The stretch at 349 to 382 forms a coiled coil; that stretch reads LELKEQQTLGRLKSLEALVRQLKQENWLSEENVK.

Interacts with HTRA2; under apoptotic conditions. Interacts with ABRAXAS2. Cleaved by HTRA2 during apoptosis.

Its subcellular location is the nucleus. Functionally, has sequence-specific DNA-binding activity and can function as transcriptional repressor (in vitro). May be a regulator of cell cycle: THAP5 overexpression in human cell lines causes cell cycle arrest at G2/M phase. This chain is THAP domain-containing protein 5 (THAP5), found in Macaca fascicularis (Crab-eating macaque).